Consider the following 142-residue polypeptide: Nucleoside diphosphate kinase (142 aa).

ATP-binding residues include Lys-11, Phe-59, Arg-87, Thr-93, Arg-104, and Asn-114. The Pros-phosphohistidine intermediate role is filled by His-117.

Belongs to the NDK family. Homotetramer. It depends on Mg(2+) as a cofactor.

It is found in the cytoplasm. The catalysed reaction is a 2'-deoxyribonucleoside 5'-diphosphate + ATP = a 2'-deoxyribonucleoside 5'-triphosphate + ADP. It catalyses the reaction a ribonucleoside 5'-diphosphate + ATP = a ribonucleoside 5'-triphosphate + ADP. In terms of biological role, major role in the synthesis of nucleoside triphosphates other than ATP. The ATP gamma phosphate is transferred to the NDP beta phosphate via a ping-pong mechanism, using a phosphorylated active-site intermediate. This chain is Nucleoside diphosphate kinase, found in Photobacterium profundum (strain SS9).